Reading from the N-terminus, the 165-residue chain is MASTFSGDETAPFFGFLGAAAALVFSCMGAAYGTAKSGVGVASMGVMRPELVMKSIVPVVMAGVLGIYGLIIAVIISTGINPKAKSYYLFDGYAHLSSGLACGLAGLSAGMAIGIVGDAGVRANAQQPKLFVGMILILIFAEALALYGLIVGIILSSRAGQSRAE.

The Lumenal segment spans residues Met1–Pro12. The helical transmembrane segment at Phe13 to Gly33 threads the bilayer. At Thr34–Ser55 the chain is on the cytoplasmic side. A helical membrane pass occupies residues Ile56–Ile76. The Lumenal portion of the chain corresponds to Ser77–His95. A helical membrane pass occupies residues Leu96–Gly117. At Asp118 to Lys129 the chain is on the cytoplasmic side. The chain crosses the membrane as a helical span at residues Leu130–Leu155. The Lumenal portion of the chain corresponds to Ser156–Glu165.

It belongs to the V-ATPase proteolipid subunit family. As to quaternary structure, V-ATPase is a heteromultimeric enzyme composed of a peripheral catalytic V1 complex (components A to H) attached to an integral membrane V0 proton pore complex (components: a, c, c'', d and e). The proteolipid components c and c'' are present as a hexameric ring that forms the proton-conducting pore. In terms of tissue distribution, expressed in leaf, root, flower and silique, with lower expression in roots.

The protein localises to the vacuole membrane. Functionally, proton-conducting pore forming subunit of the membrane integral V0 complex of vacuolar ATPase. V-ATPase is responsible for acidifying a variety of intracellular compartments in eukaryotic cells. The chain is V-type proton ATPase subunit c2 (VHA-c2) from Arabidopsis thaliana (Mouse-ear cress).